We begin with the raw amino-acid sequence, 347 residues long: NHL repeat-containing protein 3 (347 aa).

The N-terminal stretch at 1-22 (MARAWVCLAGAAFFLSCLVLHS) is a signal peptide. An NHL 1 repeat occupies 47–93 (RLDLGWPKNSEYFTGATFCVAVDSLNGLVYVAQRGDNIPKVLVFSED). The N-linked (GlcNAc...) asparagine glycan is linked to asparagine 101. NHL repeat units follow at residues 150-196 (TPGK…LSQD) and 200-243 (LWLR…FDKD). N-linked (GlcNAc...) asparagine glycans are attached at residues asparagine 206 and asparagine 278. The NHL 4 repeat unit spans residues 294–338 (GDCSVVSTIQLADQVLPHLLEVDRKTGAVYVAEIGAKQIQKYIPW).

The polypeptide is NHL repeat-containing protein 3 (Nhlrc3) (Mus musculus (Mouse)).